Consider the following 239-residue polypeptide: Ribose-5-phosphate isomerase A (239 aa).

Substrate-binding positions include 30-33 (SGST), 87-90 (DGAD), and 100-103 (KGGG). Residue E109 is the Proton acceptor of the active site. K127 serves as a coordination point for substrate.

This sequence belongs to the ribose 5-phosphate isomerase family. As to quaternary structure, homodimer.

The catalysed reaction is aldehydo-D-ribose 5-phosphate = D-ribulose 5-phosphate. It participates in carbohydrate degradation; pentose phosphate pathway; D-ribose 5-phosphate from D-ribulose 5-phosphate (non-oxidative stage): step 1/1. Catalyzes the reversible conversion of ribose-5-phosphate to ribulose 5-phosphate. The polypeptide is Ribose-5-phosphate isomerase A (Synechococcus sp. (strain CC9605)).